The chain runs to 335 residues: 2-acylglycerol O-acyltransferase 2 (335 aa).

Helical transmembrane passes span 24 to 44 and 104 to 124; these read WAVS…LLLF and YIMG…NFCT. Residue Asn-206 is glycosylated (N-linked (GlcNAc...) asparagine).

This sequence belongs to the diacylglycerol acyltransferase family.

Its subcellular location is the endoplasmic reticulum membrane. The protein resides in the cytoplasm. It is found in the perinuclear region. It carries out the reaction a 2-acylglycerol + an acyl-CoA = a 1,2-diacylglycerol + CoA. The enzyme catalyses a 2-acylglycerol + an acyl-CoA = a 1,2-diacyl-sn-glycerol + CoA. The catalysed reaction is a 2-acylglycerol + an acyl-CoA = a 2,3-diacyl-sn-glycerol + CoA. It catalyses the reaction a 1-acylglycerol + an acyl-CoA = a 1,2-diacylglycerol + CoA. It carries out the reaction a 1-acylglycerol + an acyl-CoA = a 1,3-diacylglycerol + CoA. The enzyme catalyses 1-O-alkylglycerol + an acyl-CoA = 1-O-alkyl-3-acylglycerol + CoA. The catalysed reaction is an acyl-CoA + a 1,2-diacyl-sn-glycerol = a triacyl-sn-glycerol + CoA. The protein operates within glycerolipid metabolism; triacylglycerol biosynthesis. Involved in glycerolipid synthesis and lipid metabolism. Catalyzes the formation of diacylglycerol, the precursor of triacylglycerol, by transferring the acyl chain of a fatty acyl-CoA to a monoacylglycerol. Plays a central role in absorption of dietary fat in the small intestine by catalyzing the resynthesis of triacylglycerol in enterocytes. Has a preference toward monoacylglycerols containing unsaturated fatty acids in an order of C18:3 &gt; C18:2 &gt; C18:1 &gt; C18:0 at sn-2. Able to use 1-monoalkylglycerol (1-MAkG, 1-O-alkylglycerol) as an acyl acceptor for the synthesis of monoalkyl-monoacylglycerol (MAMAG, 1-O-alkyl-3-acylglycerol or 1-O-alkyl-2-acylglycerol) and subsequently, with lower efficiency, may add another acyl chain producing monoalkyl-diacylglycerol (MADAG, 1-O-alkyl-2,3-diacylglycerol). Possesses weak but significant activity with diacylglycerol as substrate, producing triacylglycerol (triacyl-sn-glycerol). This is 2-acylglycerol O-acyltransferase 2 (mogat2) from Xenopus tropicalis (Western clawed frog).